Consider the following 890-residue polypeptide: Exo-beta-D-glucosaminidase (890 aa).

Positions 1-18 are cleaved as a signal peptide; it reads MIAKAVAALLLGSGLASA. A propeptide spanning residues 19–26 is cleaved from the precursor; the sequence is AGTPLTSK. Asn194, Asn334, and Asn438 each carry an N-linked (GlcNAc...) asparagine glycan. The active-site Proton donor is the Asp462. The active-site Nucleophile is the Glu537. N-linked (GlcNAc...) asparagine glycans are attached at residues Asn576 and Asn687.

The protein belongs to the glycosyl hydrolase 2 family. In terms of assembly, monomer.

The protein localises to the secreted. It localises to the extracellular space. The catalysed reaction is Hydrolysis of chitosan or chitosan oligosaccharides to remove successive D-glucosamine residues from the non-reducing termini.. Its function is as follows. Hydrolyzes chitosan and chitooligosaccharides with retention of anomeric configuration. Has no activity against beta-D-galactoside, beta-D-glucuronide, beta-D-mannoside, chitin, glycol chitosan, cellulose, N,N'-diacetylchitibiose and pNP-GlcNAc. The chain is Exo-beta-D-glucosaminidase from Hypocrea virens (Gliocladium virens).